Reading from the N-terminus, the 486-residue chain is Cardiolipin synthase A (486 aa).

Transmembrane regions (helical) follow at residues 3–23 (IFYD…IANI) and 38–58 (MSWL…WFFF). PLD phosphodiesterase domains lie at 219 to 246 (LDVR…VDPY) and 399 to 426 (KKGL…DMRS). Residues His-224, Lys-226, Asp-231, His-404, Lys-406, and Asp-411 contribute to the active site.

This sequence belongs to the phospholipase D family. Cardiolipin synthase subfamily. ClsA sub-subfamily.

It localises to the cell inner membrane. It carries out the reaction 2 a 1,2-diacyl-sn-glycero-3-phospho-(1'-sn-glycerol) = a cardiolipin + glycerol. Its function is as follows. Catalyzes the reversible phosphatidyl group transfer from one phosphatidylglycerol molecule to another to form cardiolipin (CL) (diphosphatidylglycerol) and glycerol. In Buchnera aphidicola subsp. Schizaphis graminum (strain Sg), this protein is Cardiolipin synthase A.